The following is a 569-amino-acid chain: Proline--tRNA ligase (569 aa).

This sequence belongs to the class-II aminoacyl-tRNA synthetase family. ProS type 1 subfamily. As to quaternary structure, homodimer.

It localises to the cytoplasm. It catalyses the reaction tRNA(Pro) + L-proline + ATP = L-prolyl-tRNA(Pro) + AMP + diphosphate. In terms of biological role, catalyzes the attachment of proline to tRNA(Pro) in a two-step reaction: proline is first activated by ATP to form Pro-AMP and then transferred to the acceptor end of tRNA(Pro). As ProRS can inadvertently accommodate and process non-cognate amino acids such as alanine and cysteine, to avoid such errors it has two additional distinct editing activities against alanine. One activity is designated as 'pretransfer' editing and involves the tRNA(Pro)-independent hydrolysis of activated Ala-AMP. The other activity is designated 'posttransfer' editing and involves deacylation of mischarged Ala-tRNA(Pro). The misacylated Cys-tRNA(Pro) is not edited by ProRS. The sequence is that of Proline--tRNA ligase from Campylobacter hominis (strain ATCC BAA-381 / DSM 21671 / CCUG 45161 / LMG 19568 / NCTC 13146 / CH001A).